The following is a 209-amino-acid chain: Thiamine-phosphate synthase (209 aa).

4-amino-2-methyl-5-(diphosphooxymethyl)pyrimidine-binding positions include 38 to 42 (QYRDK) and Asn70. 2 residues coordinate Mg(2+): Asp71 and Asp89. Thr108 serves as a coordination point for 4-amino-2-methyl-5-(diphosphooxymethyl)pyrimidine. 135-137 (SNT) contacts 2-[(2R,5Z)-2-carboxy-4-methylthiazol-5(2H)-ylidene]ethyl phosphate. Lys138 is a 4-amino-2-methyl-5-(diphosphooxymethyl)pyrimidine binding site. Residue Gly165 participates in 2-[(2R,5Z)-2-carboxy-4-methylthiazol-5(2H)-ylidene]ethyl phosphate binding.

It belongs to the thiamine-phosphate synthase family. The cofactor is Mg(2+).

It catalyses the reaction 2-[(2R,5Z)-2-carboxy-4-methylthiazol-5(2H)-ylidene]ethyl phosphate + 4-amino-2-methyl-5-(diphosphooxymethyl)pyrimidine + 2 H(+) = thiamine phosphate + CO2 + diphosphate. The catalysed reaction is 2-(2-carboxy-4-methylthiazol-5-yl)ethyl phosphate + 4-amino-2-methyl-5-(diphosphooxymethyl)pyrimidine + 2 H(+) = thiamine phosphate + CO2 + diphosphate. The enzyme catalyses 4-methyl-5-(2-phosphooxyethyl)-thiazole + 4-amino-2-methyl-5-(diphosphooxymethyl)pyrimidine + H(+) = thiamine phosphate + diphosphate. It participates in cofactor biosynthesis; thiamine diphosphate biosynthesis; thiamine phosphate from 4-amino-2-methyl-5-diphosphomethylpyrimidine and 4-methyl-5-(2-phosphoethyl)-thiazole: step 1/1. In terms of biological role, condenses 4-methyl-5-(beta-hydroxyethyl)thiazole monophosphate (THZ-P) and 2-methyl-4-amino-5-hydroxymethyl pyrimidine pyrophosphate (HMP-PP) to form thiamine monophosphate (TMP). The chain is Thiamine-phosphate synthase from Ectopseudomonas mendocina (strain ymp) (Pseudomonas mendocina).